Here is a 245-residue protein sequence, read N- to C-terminus: DNA polymerase sliding clamp 1 (245 aa).

The protein belongs to the PCNA family. As to quaternary structure, homotrimer. The subunits circularize to form a toroid; DNA passes through its center. Replication factor C (RFC) is required to load the toroid on the DNA.

In terms of biological role, sliding clamp subunit that acts as a moving platform for DNA processing. Responsible for tethering the catalytic subunit of DNA polymerase and other proteins to DNA during high-speed replication. The sequence is that of DNA polymerase sliding clamp 1 from Sulfurisphaera ohwakuensis.